A 214-amino-acid polypeptide reads, in one-letter code: Histidine biosynthesis bifunctional protein HisIE (214 aa).

Residues Met1–Val114 form a phosphoribosyl-AMP cyclohydrolase region. The segment at Val115 to Asn214 is phosphoribosyl-ATP pyrophosphohydrolase.

It in the N-terminal section; belongs to the PRA-CH family. The protein in the C-terminal section; belongs to the PRA-PH family.

It localises to the cytoplasm. It catalyses the reaction 1-(5-phospho-beta-D-ribosyl)-ATP + H2O = 1-(5-phospho-beta-D-ribosyl)-5'-AMP + diphosphate + H(+). The enzyme catalyses 1-(5-phospho-beta-D-ribosyl)-5'-AMP + H2O = 1-(5-phospho-beta-D-ribosyl)-5-[(5-phospho-beta-D-ribosylamino)methylideneamino]imidazole-4-carboxamide. It functions in the pathway amino-acid biosynthesis; L-histidine biosynthesis; L-histidine from 5-phospho-alpha-D-ribose 1-diphosphate: step 2/9. The protein operates within amino-acid biosynthesis; L-histidine biosynthesis; L-histidine from 5-phospho-alpha-D-ribose 1-diphosphate: step 3/9. In Thermus thermophilus (strain ATCC BAA-163 / DSM 7039 / HB27), this protein is Histidine biosynthesis bifunctional protein HisIE.